The following is an 849-amino-acid chain: Protein translocase subunit SecA (849 aa).

ATP-binding positions include Q85, 103 to 107 (GEGKT), and D493. 4 residues coordinate Zn(2+): C832, C834, C843, and H844.

The protein belongs to the SecA family. In terms of assembly, monomer and homodimer. Part of the essential Sec protein translocation apparatus which comprises SecA, SecYEG and auxiliary proteins SecDF. Other proteins may also be involved. Requires Zn(2+) as cofactor.

Its subcellular location is the cell membrane. The protein localises to the cytoplasm. It catalyses the reaction ATP + H2O + cellular proteinSide 1 = ADP + phosphate + cellular proteinSide 2.. Part of the Sec protein translocase complex. Interacts with the SecYEG preprotein conducting channel. Has a central role in coupling the hydrolysis of ATP to the transfer of proteins into and across the cell membrane, serving as an ATP-driven molecular motor driving the stepwise translocation of polypeptide chains across the membrane. The sequence is that of Protein translocase subunit SecA from Streptococcus thermophilus (strain ATCC BAA-250 / LMG 18311).